The following is a 276-amino-acid chain: Small ribosomal subunit protein uS2 (276 aa).

The disordered stretch occupies residues 255-276 (ASATATAAPTEAGAPEPTTDPS).

The protein belongs to the universal ribosomal protein uS2 family.

In Mycolicibacterium paratuberculosis (strain ATCC BAA-968 / K-10) (Mycobacterium paratuberculosis), this protein is Small ribosomal subunit protein uS2.